Consider the following 123-residue polypeptide: WAP four-disulfide core domain protein 5 (123 aa).

Residues 1–24 (MRIQSLLLLGALLAVGSQLPAVFG) form the signal peptide. 2 consecutive WAP domains span residues 27 to 73 (KGEK…CVPR) and 74 to 121 (VSVK…RDPA). 8 cysteine pairs are disulfide-bonded: Cys34–Cys62, Cys41–Cys66, Cys49–Cys61, Cys55–Cys70, Cys81–Cys109, Cys88–Cys113, Cys96–Cys108, and Cys102–Cys117.

It localises to the secreted. Functionally, putative acid-stable proteinase inhibitor. This Pongo abelii (Sumatran orangutan) protein is WAP four-disulfide core domain protein 5 (WFDC5).